Reading from the N-terminus, the 1100-residue chain is Beta-alanine-activating enzyme (1100 aa).

The disordered stretch occupies residues 162-181 (HKVTDREDRVSAESRTPEKE). ATP is bound by residues 197–205 (TSGTTGTPK), Asp427, Arg441, and Lys526. The 81-residue stretch at 552–632 (EELWGKLQYL…DVYNHIVQAV (81 aa)) folds into the Carrier domain. The residue at position 591 (Ser591) is an O-(pantetheine 4'-phosphoryl)serine. The disordered stretch occupies residues 643–671 (SYTTKRKFSDADPEEASGKPARLESAWPS). The residue at position 651 (Ser651) is a Phosphoserine.

The protein belongs to the ATP-dependent AMP-binding enzyme family.

Functionally, covalently binds beta-alanine in an ATP-dependent manner to form a thioester bond with its phosphopantetheine group and transfers it to an as yet unknown acceptor via an amide bond. May be required for a post-translational protein modification or for post-transcriptional modification of an RNA. This is Beta-alanine-activating enzyme (Aasdh) from Mus musculus (Mouse).